Reading from the N-terminus, the 190-residue chain is Protein E6C (190 aa).

A compositionally biased stretch (pro residues) spans 1-15 (MFGVAKPPPSPIPKP). Disordered stretches follow at residues 1–110 (MFGV…EGRR) and 160–190 (PRTP…PPDD). Residues 36-46 (ARQRASTRHRP) are compositionally biased toward basic residues. Pro residues-rich tracts occupy residues 162–171 (TPGPVAPIPE) and 181–190 (TRTPPPPPDD).

The chain is Protein E6C (13) from Equus caballus (Horse).